The primary structure comprises 427 residues: Probable purple acid phosphatase 20 (427 aa).

A signal peptide spans 1 to 21 (MVKVLGLVAILLIVLAGNVLS). An N-linked (GlcNAc...) asparagine glycan is attached at N85. 3 residues coordinate Fe cation: D147, D174, and Y177. D174 contacts Zn(2+). Residues N207 and H291 each coordinate Zn(2+). N207 serves as a coordination point for substrate. The Proton donor role is filled by H301. H330 lines the Zn(2+) pocket. Position 330–332 (330–332 (HVH)) interacts with substrate. Position 332 (H332) interacts with Fe cation. N392 carries an N-linked (GlcNAc...) asparagine glycan.

This sequence belongs to the metallophosphoesterase superfamily. Purple acid phosphatase family. Homodimer. Fe cation serves as cofactor. The cofactor is Zn(2+). Expressed flowers and siliques.

It is found in the secreted. It carries out the reaction a phosphate monoester + H2O = an alcohol + phosphate. This Arabidopsis thaliana (Mouse-ear cress) protein is Probable purple acid phosphatase 20 (PAP20).